The primary structure comprises 304 residues: Protease HtpX homolog (304 aa).

Transmembrane regions (helical) follow at residues 14 to 34 (IFII…IGII) and 39 to 59 (YLNG…IMVM). A Zn(2+)-binding site is contributed by histidine 144. The active site involves glutamate 145. Histidine 148 contributes to the Zn(2+) binding site. 2 helical membrane passes run 159-179 (IAIA…RMIF) and 202-222 (AIIY…ATAI). Glutamate 231 provides a ligand contact to Zn(2+).

The protein belongs to the peptidase M48B family. It depends on Zn(2+) as a cofactor.

It localises to the cell membrane. The sequence is that of Protease HtpX homolog from Listeria monocytogenes serovar 1/2a (strain ATCC BAA-679 / EGD-e).